A 143-amino-acid polypeptide reads, in one-letter code: Large ribosomal subunit protein uL16 (143 aa).

It belongs to the universal ribosomal protein uL16 family. As to quaternary structure, part of the 50S ribosomal subunit.

Functionally, binds 23S rRNA and is also seen to make contacts with the A and possibly P site tRNAs. This is Large ribosomal subunit protein uL16 from Sphingopyxis alaskensis (strain DSM 13593 / LMG 18877 / RB2256) (Sphingomonas alaskensis).